A 127-amino-acid polypeptide reads, in one-letter code: Protein SPIRAL1-like 4 (127 aa).

A disordered region spans residues 1–127 (MGKARGVNSG…FGSGPCGSDK (127 aa)). The segment covering 39-48 (TTTTTTTTTT) has biased composition (low complexity). Serine 80 carries the phosphoserine modification. Residues 80–94 (SPNNYYRSDGQNCGN) are compositionally biased toward polar residues.

This sequence belongs to the SPIRAL1 family. In terms of tissue distribution, ubiquitous.

Its function is as follows. Acts redundantly with SPR1 in maintaining the cortical microtubules organization essential for anisotropic cell growth. The protein is Protein SPIRAL1-like 4 (SP1L4) of Arabidopsis thaliana (Mouse-ear cress).